Consider the following 366-residue polypeptide: Isocitrate dehydrogenase [NAD] subunit alpha, mitochondrial (366 aa).

The N-terminal 27 residues, 1-27, are a transit peptide targeting the mitochondrion; the sequence is MAGPAWISKVSRLLGAFHNQKQVTRGF. Residue Lys77 is modified to N6-succinyllysine. Thr101 is modified (phosphothreonine). The substrate site is built by Arg115, Arg125, and Arg146. Position 223 is an N6-acetyllysine (Lys223). Mg(2+) contacts are provided by Asp233, Asp257, and Asp261. At Lys343 the chain carries N6-acetyllysine; alternate. The residue at position 343 (Lys343) is an N6-succinyllysine; alternate. Lys350 carries the post-translational modification N6-succinyllysine.

It belongs to the isocitrate and isopropylmalate dehydrogenases family. As to quaternary structure, heterooligomer of subunits alpha (IDH3A), beta (IDH3B), and gamma (IDH3G) in the apparent ratio of 2:1:1. The heterodimer containing one IDH3A and one IDH3B subunit and the heterodimer containing one IDH3A and one IDH3G subunit assemble into a heterotetramer (which contains two subunits of IDH3A, one of IDH3B and one of IDH3G) and further into the heterooctamer. The cofactor is Mg(2+). It depends on Mn(2+) as a cofactor.

It localises to the mitochondrion. The catalysed reaction is D-threo-isocitrate + NAD(+) = 2-oxoglutarate + CO2 + NADH. Its activity is regulated as follows. The heterotetramer and the heterodimer composed of IDH3A and IDH3G subunits can be allosterically activated by citrate (CIT) or/and ADP, and the two activators can act independently or synergistically. The heterodimer composed of IDH3A and IDH3B subunits cannot be allosterically regulated and the allosteric regulation of the heterotetramer is through the IDH3G subunit and not the IDH3B subunit. The IDH3G subunit contains the allosteric site which consists of a CIT-binding site and an ADP-binding site, and the binding of CIT and ADP causes conformational changes at the allosteric site which are transmitted to the active site in the catalytic subunit (IDH3A) through a cascade of conformational changes at the heterodimer interface, leading to stabilization of the isocitrate-binding at the active site and thus activation of the enzyme. ATP can activate the heterotetramer and the heterodimer composed of IDH3A and IDH3G subunits at low concentrations but inhibits their activities at high concentrations, whereas ATP exhibits only inhibitory effect on the heterodimer composed of IDH3A and IDH3B subunits. Catalytic subunit of the enzyme which catalyzes the decarboxylation of isocitrate (ICT) into alpha-ketoglutarate. The heterodimer composed of the alpha (IDH3A) and beta (IDH3B) subunits and the heterodimer composed of the alpha (IDH3A) and gamma (IDH3G) subunits, have considerable basal activity but the full activity of the heterotetramer (containing two subunits of IDH3A, one of IDH3B and one of IDH3G) requires the assembly and cooperative function of both heterodimers. The chain is Isocitrate dehydrogenase [NAD] subunit alpha, mitochondrial (IDH3A) from Sus scrofa (Pig).